The chain runs to 208 residues: Methylthioribulose-1-phosphate dehydratase (208 aa).

Zn(2+)-binding residues include His96 and His98.

This sequence belongs to the aldolase class II family. MtnB subfamily. It depends on Zn(2+) as a cofactor.

The enzyme catalyses 5-(methylsulfanyl)-D-ribulose 1-phosphate = 5-methylsulfanyl-2,3-dioxopentyl phosphate + H2O. Its pathway is amino-acid biosynthesis; L-methionine biosynthesis via salvage pathway; L-methionine from S-methyl-5-thio-alpha-D-ribose 1-phosphate: step 2/6. In terms of biological role, catalyzes the dehydration of methylthioribulose-1-phosphate (MTRu-1-P) into 2,3-diketo-5-methylthiopentyl-1-phosphate (DK-MTP-1-P). The sequence is that of Methylthioribulose-1-phosphate dehydratase from Pseudomonas fluorescens (strain Pf0-1).